The sequence spans 388 residues: Succinate--CoA ligase [ADP-forming] subunit beta (388 aa).

Positions 9–244 (KQLFAEYGLP…PSQEDEREAH (236 aa)) constitute an ATP-grasp domain. ATP-binding positions include Lys46, 53-55 (GRG), Glu99, Thr102, and Glu107. Residues Asn199 and Asp213 each coordinate Mg(2+). Residues Asn264 and 321-323 (GIV) each bind substrate.

The protein belongs to the succinate/malate CoA ligase beta subunit family. As to quaternary structure, heterotetramer of two alpha and two beta subunits. Mg(2+) serves as cofactor.

The catalysed reaction is succinate + ATP + CoA = succinyl-CoA + ADP + phosphate. It carries out the reaction GTP + succinate + CoA = succinyl-CoA + GDP + phosphate. It participates in carbohydrate metabolism; tricarboxylic acid cycle; succinate from succinyl-CoA (ligase route): step 1/1. Its function is as follows. Succinyl-CoA synthetase functions in the citric acid cycle (TCA), coupling the hydrolysis of succinyl-CoA to the synthesis of either ATP or GTP and thus represents the only step of substrate-level phosphorylation in the TCA. The beta subunit provides nucleotide specificity of the enzyme and binds the substrate succinate, while the binding sites for coenzyme A and phosphate are found in the alpha subunit. This chain is Succinate--CoA ligase [ADP-forming] subunit beta, found in Colwellia psychrerythraea (strain 34H / ATCC BAA-681) (Vibrio psychroerythus).